Consider the following 236-residue polypeptide: tRNA1(Val) (adenine(37)-N6)-methyltransferase (236 aa).

This sequence belongs to the methyltransferase superfamily. tRNA (adenine-N(6)-)-methyltransferase family.

Its subcellular location is the cytoplasm. The enzyme catalyses adenosine(37) in tRNA1(Val) + S-adenosyl-L-methionine = N(6)-methyladenosine(37) in tRNA1(Val) + S-adenosyl-L-homocysteine + H(+). Functionally, specifically methylates the adenine in position 37 of tRNA(1)(Val) (anticodon cmo5UAC). In Histophilus somni (strain 129Pt) (Haemophilus somnus), this protein is tRNA1(Val) (adenine(37)-N6)-methyltransferase.